The following is a 105-amino-acid chain: Protein S100-A11 (105 aa).

Methionine 1 is modified (N-acetylmethionine). Alanine 2 is modified (N-acetylalanine; in Protein S100-A11, N-terminally processed). Lysine 3 bears the N6-acetyllysine mark. A phosphoserine mark is found at serine 5 and serine 6. At threonine 10 the chain carries Phosphothreonine. EF-hand domains lie at 13–49 (CIES…ELAA) and 55–90 (KDPG…LAMA). An N6-acetyllysine modification is found at lysine 27. Ca(2+) is bound by residues threonine 33, glutamate 38, aspartate 68, asparagine 70, aspartate 72, glutamine 74, and glutamate 79.

Belongs to the S-100 family. Homodimer; disulfide-linked. Phosphorylation at Thr-10 by PRKCA significantly suppresses homodimerization and promotes association with NCL/nucleolin which induces nuclear translocation.

The protein localises to the cytoplasm. The protein resides in the nucleus. Facilitates the differentiation and the cornification of keratinocytes. This is Protein S100-A11 (S100A11) from Homo sapiens (Human).